A 135-amino-acid polypeptide reads, in one-letter code: Small ribosomal subunit protein uS12 (135 aa).

The residue at position 89 (aspartate 89) is a 3-methylthioaspartic acid. The tract at residues 101-135 (SLDTSGVADRKQSRSKYGAKQPKAGAAAPAKGKGR) is disordered. Positions 118-135 (GAKQPKAGAAAPAKGKGR) are enriched in low complexity.

It belongs to the universal ribosomal protein uS12 family. In terms of assembly, part of the 30S ribosomal subunit. Contacts proteins S8 and S17. May interact with IF1 in the 30S initiation complex.

In terms of biological role, with S4 and S5 plays an important role in translational accuracy. Interacts with and stabilizes bases of the 16S rRNA that are involved in tRNA selection in the A site and with the mRNA backbone. Located at the interface of the 30S and 50S subunits, it traverses the body of the 30S subunit contacting proteins on the other side and probably holding the rRNA structure together. The combined cluster of proteins S8, S12 and S17 appears to hold together the shoulder and platform of the 30S subunit. The polypeptide is Small ribosomal subunit protein uS12 (Chlorobium limicola (strain DSM 245 / NBRC 103803 / 6330)).